The primary structure comprises 298 residues: Acetylglutamate kinase (298 aa).

Residues 69 to 70, Arg91, and Asn191 contribute to the substrate site; that span reads GG.

Belongs to the acetylglutamate kinase family. ArgB subfamily.

It is found in the cytoplasm. It carries out the reaction N-acetyl-L-glutamate + ATP = N-acetyl-L-glutamyl 5-phosphate + ADP. It participates in amino-acid biosynthesis; L-arginine biosynthesis; N(2)-acetyl-L-ornithine from L-glutamate: step 2/4. Catalyzes the ATP-dependent phosphorylation of N-acetyl-L-glutamate. This is Acetylglutamate kinase from Neisseria meningitidis serogroup C / serotype 2a (strain ATCC 700532 / DSM 15464 / FAM18).